The sequence spans 407 residues: MDTLLERFLRYVTFHTRSDATNPACPSSEGQLVFARALCDEMQQMGLSRVTLDEYGYLTACLPGNQPDAPAIGLIAHMDTADYEAAHVVPQIIENYQGGDICLGKGDEVLAIRDYRFLKNYLGQDLITTDGSTLLGADDKAGIAEILTAIDHLLAHPEIPRGDVWVGFTPDEEIGRGADRFPLDRFPAKWAYTVDGGELGELEYENFNAAGATVRFIGNNVHPGTAKGSMINSQTLAARFHAAMPTEQTPEATDGYQGFFHLAQMNGTVEETCLHYIIRDFDDEGFAARKAQLKERVASLQLEAPRARIELTLTDSYRNMRSQIEPHMHIVELAKAAMQAADVTPRIKPIRGGTDGARLSFMGLPCPNLFTGGHNFHGKHEFIPLQSMEKAVTTLVELVRLTSAWRG.

H77 contacts Zn(2+). Residue D79 is part of the active site. D138 is a binding site for Zn(2+). Catalysis depends on E172, which acts as the Proton acceptor. Zn(2+) is bound by residues E173, D195, and H377.

It belongs to the peptidase M20B family. Zn(2+) serves as cofactor.

Its subcellular location is the cytoplasm. The catalysed reaction is Release of the N-terminal residue from a tripeptide.. Cleaves the N-terminal amino acid of tripeptides. This is Peptidase T from Aeromonas hydrophila subsp. hydrophila (strain ATCC 7966 / DSM 30187 / BCRC 13018 / CCUG 14551 / JCM 1027 / KCTC 2358 / NCIMB 9240 / NCTC 8049).